The chain runs to 392 residues: Formate-dependent phosphoribosylglycinamide formyltransferase (392 aa).

N(1)-(5-phospho-beta-D-ribosyl)glycinamide contacts are provided by residues 22-23 (EL) and E82. ATP contacts are provided by residues R114, K155, 160 to 165 (SSGKGQ), 195 to 198 (EGLV), and E203. Positions 119–308 (RLAAETLSLP…EFALHVRAFL (190 aa)) constitute an ATP-grasp domain. Mg(2+) is bound by residues E267 and E279. Residues D286, K355, and 362–363 (RR) each bind N(1)-(5-phospho-beta-D-ribosyl)glycinamide.

This sequence belongs to the PurK/PurT family. Homodimer.

It carries out the reaction N(1)-(5-phospho-beta-D-ribosyl)glycinamide + formate + ATP = N(2)-formyl-N(1)-(5-phospho-beta-D-ribosyl)glycinamide + ADP + phosphate + H(+). The protein operates within purine metabolism; IMP biosynthesis via de novo pathway; N(2)-formyl-N(1)-(5-phospho-D-ribosyl)glycinamide from N(1)-(5-phospho-D-ribosyl)glycinamide (formate route): step 1/1. Involved in the de novo purine biosynthesis. Catalyzes the transfer of formate to 5-phospho-ribosyl-glycinamide (GAR), producing 5-phospho-ribosyl-N-formylglycinamide (FGAR). Formate is provided by PurU via hydrolysis of 10-formyl-tetrahydrofolate. This chain is Formate-dependent phosphoribosylglycinamide formyltransferase, found in Sodalis glossinidius (strain morsitans).